The primary structure comprises 509 residues: Histidine--tRNA ligase, cytoplasmic (509 aa).

Residue Ala-2 is modified to N-acetylalanine. Residues 3 to 59 (ERAALEELVKLQGERVRGLKQQKASAELIEEEVAKLLKLKAQLGPDESKQKFVLKTP) form the WHEP-TRS domain. At Ser-66 the chain carries Phosphoserine. L-histidine is bound by residues 130 to 132 (DLT), Arg-157, Gln-173, Asp-177, Arg-326, and 330 to 331 (YY). Position 356 is a phosphoserine (Ser-356).

Belongs to the class-II aminoacyl-tRNA synthetase family. In terms of assembly, homodimer.

The protein localises to the cytoplasm. It catalyses the reaction tRNA(His) + L-histidine + ATP = L-histidyl-tRNA(His) + AMP + diphosphate + H(+). Catalyzes the ATP-dependent ligation of histidine to the 3'-end of its cognate tRNA, via the formation of an aminoacyl-adenylate intermediate (His-AMP). Plays a role in axon guidance. The chain is Histidine--tRNA ligase, cytoplasmic (HARS1) from Pongo abelii (Sumatran orangutan).